Reading from the N-terminus, the 1457-residue chain is ABC transporter G family member 36 (1457 aa).

The tract at residues 14–43 is disordered; sequence RLGGSMRGDSGSMWRRGDDVFSRSSREEDD. Residues 28–39 show a composition bias toward basic and acidic residues; that stretch reads RRGDDVFSRSSR. The ABC transporter 1 domain maps to 164–437; it reads GNALGILPNR…FESMGFKCPD (274 aa). 197-204 contributes to the ATP binding site; it reads GPPGSGKT. In terms of domain architecture, ABC transmembrane type-2 1 spans 515–728; the sequence is ELLKANIDRE…AQNAISVNEL (214 aa). The next 7 membrane-spanning stretches (helical) occupy residues 533–553, 565–585, 621–641, 653–673, 677–697, 706–726, and 765–785; these read FVYM…MTLF, SGGI…FNGF, IPIT…VIGF, LLML…GGAA, IVAN…GGFI, WWIW…ISVN, and IGFG…TLAL. The segment at 821 to 841 is disordered; that stretch reads SSGSTRRPMGNGTENDSTIVD. The ABC transporter 2 domain maps to 860-1112; the sequence is LSFDNVRYSV…ELIKYFESIP (253 aa). 905–912 is a binding site for ATP; it reads GVSGAGKT. In terms of domain architecture, ABC transmembrane type-2 2 spans 1185–1399; it reads TQCMACLWKQ…TLYGLVVSQF (215 aa). A run of 7 helical transmembrane segments spans residues 1209-1229, 1244-1264, 1292-1312, 1319-1339, 1349-1369, 1380-1400, and 1429-1449; these read FFFT…LGGK, YAAV…VVAV, IPYT…MIGF, FFWY…YGMM, IASI…GFVI, WYCW…SQFG, and WVAT…GFAI.

The protein belongs to the ABC transporter superfamily. ABCG family. PDR (TC 3.A.1.205) subfamily.

It is found in the membrane. Its function is as follows. May be a general defense protein. The protein is ABC transporter G family member 36 of Oryza sativa subsp. japonica (Rice).